Consider the following 55-residue polypeptide: Large ribosomal subunit protein bL33 (55 aa).

The protein belongs to the bacterial ribosomal protein bL33 family.

This Jannaschia sp. (strain CCS1) protein is Large ribosomal subunit protein bL33.